The chain runs to 157 residues: Probable succinate transporter subunit YjjB (157 aa).

5 helical membrane passes run 8-28, 34-54, 55-75, 87-107, and 129-149; these read LALM…AMVF, ALPW…LMMS, AGFN…SIGI, VFTV…TAMI, and FLKA…PGLW.

It belongs to the ThrE exporter (TC 2.A.79) family. In terms of assembly, the transporter is composed of YjjB and YjjP.

It is found in the cell inner membrane. Functionally, involved in succinate export with YjjP. Both proteins are required for export. The protein is Probable succinate transporter subunit YjjB of Salmonella typhi.